A 103-amino-acid chain; its full sequence is Small ribosomal subunit protein uS10 (103 aa).

The protein belongs to the universal ribosomal protein uS10 family. In terms of assembly, part of the 30S ribosomal subunit.

Its function is as follows. Involved in the binding of tRNA to the ribosomes. The sequence is that of Small ribosomal subunit protein uS10 from Picrophilus torridus (strain ATCC 700027 / DSM 9790 / JCM 10055 / NBRC 100828 / KAW 2/3).